The following is a 255-amino-acid chain: tRNA (guanine-N(7)-)-methyltransferase (255 aa).

Glutamate 86, glutamate 111, aspartate 138, and aspartate 161 together coordinate S-adenosyl-L-methionine. Aspartate 161 is a catalytic residue. Substrate-binding positions include lysine 165, aspartate 197, and 234–237 (TKFE).

It belongs to the class I-like SAM-binding methyltransferase superfamily. TrmB family.

It catalyses the reaction guanosine(46) in tRNA + S-adenosyl-L-methionine = N(7)-methylguanosine(46) in tRNA + S-adenosyl-L-homocysteine. It participates in tRNA modification; N(7)-methylguanine-tRNA biosynthesis. Functionally, catalyzes the formation of N(7)-methylguanine at position 46 (m7G46) in tRNA. In Pasteurella multocida (strain Pm70), this protein is tRNA (guanine-N(7)-)-methyltransferase.